Here is an 836-residue protein sequence, read N- to C-terminus: MDSDAKSRNDAPIIKLSIDLIKTYKHINQVYYTAKAKKKQQAQQQAQQQAQQLQQQAQQQQHQLQQQQQLLQQQQQQQQQQQQQQQQQQQQQQQQQQQQQQYQQQHNNNINNNNNNSNINNKNNNNNNTNFNTSNNNNNTNNNSNNNSNNNNSNNNNNNNNINNINNININNKNNNNNNNNNNNINNINNNNNKNNNNNNNNNNNDDNNNINNNNSNNNNNNNNNNNNNNNNNNNNNNNNNSNNNNNNNNLNNNNSNNNYNNNTTTTSSSNNNNNNKQSKYNDGYDDENADYIVRIGEVFVDRFEIISSLGKGSFGQVVKAFDSVLKEYVAIKIIKNKVPFYNQALIEIRLLELMNNKDPEDQYKIIKLKHHFKFRNHLCIVTELLSYNLYDLLRNTHFHGVSLNLIKKFAHQILTALFFMSTPEVDVIHCDLKPENILLRNPKRSAIKIIDFGSSCHSNERMYKYIQSRFYRSPEILLELEYSFSIDMWSLGCILVEMHVGEPLFSGQNEQDQLTKIIEVLDLPPSHMIDSSPKAKKFFTKDPINSTYQLKKNEKLKTNVEFCKKKLSEIIGVETGGPQSRRKNEPGHALVDYLKFLDLIEKMLIYDPQKRITPLEALQHSFFLTDETSQPPQQQSQQQSQQQSQQQSQQQSQQQSQQRRQSNTDNNFSNNNPINNYNSPSSKSPHQQLQQQQQQQQQQQQQQQQQQQQQQQQQQQTYSPTTQQSNHKLVDQMKKASMKDKSPHSNISNILNDSEEDNSKVHINSNTSDNMQARINFQVENQSNIYNNNNNNNNNNNNNNNNNNSNNYNNSNELSPNPPILPNLKDLLPHNNNNI.

Residues 99-278 (QQQYQQQHNN…SSNNNNNNKQ (180 aa)) are compositionally biased toward low complexity. The disordered stretch occupies residues 99–286 (QQQYQQQHNN…KQSKYNDGYD (188 aa)). A Protein kinase domain is found at 304-624 (FEIISSLGKG…PLEALQHSFF (321 aa)). ATP contacts are provided by residues 310-318 (LGKGSFGQV) and Lys-333. Residue Asp-432 is the Proton acceptor of the active site. Disordered stretches follow at residues 627–697 (DETS…QQQQ), 718–767 (TYSP…INSN), and 785–836 (NIYN…NNNI). The segment covering 630–697 (SQPPQQQSQQ…QQLQQQQQQQ (68 aa)) has biased composition (low complexity). Positions 718–728 (TYSPTTQQSNH) are enriched in polar residues. A compositionally biased stretch (basic and acidic residues) spans 729 to 744 (KLVDQMKKASMKDKSP). The segment covering 785–816 (NIYNNNNNNNNNNNNNNNNNNSNNYNNSNELS) has biased composition (low complexity).

The protein belongs to the protein kinase superfamily. CMGC Ser/Thr protein kinase family. MNB/DYRK subfamily.

It carries out the reaction L-seryl-[protein] + ATP = O-phospho-L-seryl-[protein] + ADP + H(+). The enzyme catalyses L-threonyl-[protein] + ATP = O-phospho-L-threonyl-[protein] + ADP + H(+). It catalyses the reaction L-tyrosyl-[protein] + ATP = O-phospho-L-tyrosyl-[protein] + ADP + H(+). The polypeptide is Probable serine/threonine-protein kinase dyrk1 (dyrk1) (Dictyostelium discoideum (Social amoeba)).